The following is a 681-amino-acid chain: Methionine--tRNA ligase (681 aa).

Residues 18–28 (PYANGSIHLGH) carry the 'HIGH' region motif. Positions 149, 152, 162, and 165 each coordinate Zn(2+). Positions 334–338 (KMSKS) match the 'KMSKS' region motif. Position 337 (K337) interacts with ATP. The region spanning 580-681 (DFAKLDLRIV…NGAEPGQRVS (102 aa)) is the tRNA-binding domain.

This sequence belongs to the class-I aminoacyl-tRNA synthetase family. MetG type 1 subfamily. As to quaternary structure, homodimer. Zn(2+) serves as cofactor.

It is found in the cytoplasm. The enzyme catalyses tRNA(Met) + L-methionine + ATP = L-methionyl-tRNA(Met) + AMP + diphosphate. In terms of biological role, is required not only for elongation of protein synthesis but also for the initiation of all mRNA translation through initiator tRNA(fMet) aminoacylation. The sequence is that of Methionine--tRNA ligase from Chromohalobacter salexigens (strain ATCC BAA-138 / DSM 3043 / CIP 106854 / NCIMB 13768 / 1H11).